The sequence spans 237 residues: Uridylate kinase (237 aa).

11 to 14 is a binding site for ATP; sequence KLSG. UMP is bound at residue Gly53. Positions 54 and 58 each coordinate ATP. UMP-binding positions include Asp73 and 134–141; that span reads TGNPFFTT. Residues Thr161, Tyr167, and Asp170 each contribute to the ATP site.

The protein belongs to the UMP kinase family. Homohexamer.

The protein localises to the cytoplasm. The catalysed reaction is UMP + ATP = UDP + ADP. It functions in the pathway pyrimidine metabolism; CTP biosynthesis via de novo pathway; UDP from UMP (UMPK route): step 1/1. With respect to regulation, inhibited by UTP. Functionally, catalyzes the reversible phosphorylation of UMP to UDP. This is Uridylate kinase from Paraburkholderia xenovorans (strain LB400).